A 199-amino-acid chain; its full sequence is Hematopoietic prostaglandin D synthase (199 aa).

In terms of domain architecture, GST N-terminal spans 2 to 79 (PNYKLLYFNM…YLTKNTDLAG (78 aa)). Residues Tyr8, Arg14, Trp39, 49–51 (GKI), and 63–64 (QS) each bind glutathione. The GST C-terminal domain maps to 81 to 199 (TELEQCQVDA…WILKRPQTKL (119 aa)).

This sequence belongs to the GST superfamily. Sigma family. In terms of assembly, homodimer. It depends on glutathione as a cofactor. Highly expressed in spleen and bone marrow. Lower levels of expression in small intestine, colon, liver, pancreas and skin. Not detected in brain, heart, lung or kidney (at protein level).

It is found in the cytoplasm. The enzyme catalyses prostaglandin H2 = prostaglandin D2. It carries out the reaction RX + glutathione = an S-substituted glutathione + a halide anion + H(+). The catalysed reaction is 2-glyceryl-prostaglandin H2 = 2-glyceryl-prostaglandin D2. In terms of biological role, bifunctional enzyme which catalyzes both the conversion of PGH2 to PGD2, a prostaglandin involved in smooth muscle contraction/relaxation and a potent inhibitor of platelet aggregation, and the conjugation of glutathione with a wide range of aryl halides and organic isothiocyanates. Also exhibits low glutathione-peroxidase activity towards cumene hydroperoxide. This Rattus norvegicus (Rat) protein is Hematopoietic prostaglandin D synthase.